A 102-amino-acid polypeptide reads, in one-letter code: uncharacterized protein (102 aa).

2 consecutive transmembrane segments (helical) span residues 33 to 55 (VLEL…LVVL) and 57 to 79 (VVGV…VVVA).

Its subcellular location is the membrane. This is an uncharacterized protein from Saccharomyces cerevisiae (strain ATCC 204508 / S288c) (Baker's yeast).